We begin with the raw amino-acid sequence, 763 residues long: Phosphoglycerol transferase I (763 aa).

4 consecutive transmembrane segments (helical) span residues 4-19, 26-48, 76-98, and 105-127; these read LLSFALFLASVLIYAW, WWFAATLTVLGLFVVLNITLFAS, YILPGIGIVLGLTAVFGALGWIL, and PHHFGYSLLALLLALGSVDASPA.

This sequence belongs to the OpgB family.

The protein localises to the cell inner membrane. It catalyses the reaction a phosphatidylglycerol + a membrane-derived-oligosaccharide D-glucose = a 1,2-diacyl-sn-glycerol + a membrane-derived-oligosaccharide 6-(glycerophospho)-D-glucose.. Its pathway is glycan metabolism; osmoregulated periplasmic glucan (OPG) biosynthesis. Its function is as follows. Transfers a phosphoglycerol residue from phosphatidylglycerol to the membrane-bound nascent glucan backbones. This is Phosphoglycerol transferase I from Shigella flexneri.